A 634-amino-acid polypeptide reads, in one-letter code: Polyadenylate-binding protein 1A (634 aa).

RRM domains follow at residues 11–89 (ASLY…WSQR), 99–175 (GNIF…RFKS), 191–268 (TNVY…RAQK), and 294–370 (VNLY…LAQR). Positions 541–618 (QEPLTASMLA…AVAVLQAHQA (78 aa)) constitute a PABC domain.

This sequence belongs to the polyadenylate-binding protein type-1 family. Interacts with ybx1; interaction recruits pabpc1a on C5-methylcytosine (m5C)-containing mRNAs, preventing their degradation.

The protein localises to the cytoplasm. Its function is as follows. Binds the poly(A) tail of mRNA. Prevents mRNA deadenylation and confers poly(A) stability. Binds to N6-methyladenosine (m6A)-containing mRNAs. Stimulates the translation of mRNAs to which it is bound, acting, at least in part, with dazl. Involved in the maternal-to-zygotic transition in early embryo via interaction with ybx1: interaction recruits pabpc1a on C5-methylcytosine (m5C)-containing maternal mRNAs, preventing their degradation. In Danio rerio (Zebrafish), this protein is Polyadenylate-binding protein 1A.